The following is a 372-amino-acid chain: Probable leucine aminopeptidase MCYG_08380 (372 aa).

Positions 1-19 are cleaved as a signal peptide; that stretch reads MKVSVLAAVAAFAAATAIA. Asparagine 96 is a glycosylation site (N-linked (GlcNAc...) asparagine). Residues histidine 175 and aspartate 194 each coordinate Zn(2+). N-linked (GlcNAc...) asparagine glycans are attached at residues asparagine 195 and asparagine 219. Zn(2+) contacts are provided by glutamate 233 and aspartate 260. Cysteines 305 and 309 form a disulfide. A Zn(2+)-binding site is contributed by histidine 338.

The protein belongs to the peptidase M28 family. M28E subfamily. In terms of assembly, monomer. The cofactor is Zn(2+).

It is found in the secreted. Functionally, probable extracellular aminopeptidase which contributes to pathogenicity. In Arthroderma otae (strain ATCC MYA-4605 / CBS 113480) (Microsporum canis), this protein is Probable leucine aminopeptidase MCYG_08380.